A 144-amino-acid polypeptide reads, in one-letter code: Large ribosomal subunit protein uL15 (144 aa).

Residues M1–R13 are compositionally biased toward basic and acidic residues. The interval M1–G47 is disordered. Gly residues predominate over residues D23–Q35.

It belongs to the universal ribosomal protein uL15 family. Part of the 50S ribosomal subunit.

In terms of biological role, binds to the 23S rRNA. In Levilactobacillus brevis (strain ATCC 367 / BCRC 12310 / CIP 105137 / JCM 1170 / LMG 11437 / NCIMB 947 / NCTC 947) (Lactobacillus brevis), this protein is Large ribosomal subunit protein uL15.